The chain runs to 340 residues: Ketol-acid reductoisomerase (NADP(+)) (340 aa).

The KARI N-terminal Rossmann domain maps to 1–182; the sequence is MRVYYDRDCD…GGGRSGIIET (182 aa). NADP(+) is bound by residues 24–27, Arg-48, Ser-51, Ser-53, and 83–86; these read YGSQ and DELQ. The active site involves His-108. Gly-134 serves as a coordination point for NADP(+). In terms of domain architecture, KARI C-terminal knotted spans 183 to 329; it reads NFREECETDL…KELRGMMPWI (147 aa). Mg(2+)-binding residues include Asp-191, Glu-195, Glu-227, and Glu-231. Ser-252 lines the substrate pocket.

This sequence belongs to the ketol-acid reductoisomerase family. Mg(2+) serves as cofactor.

It catalyses the reaction (2R)-2,3-dihydroxy-3-methylbutanoate + NADP(+) = (2S)-2-acetolactate + NADPH + H(+). The enzyme catalyses (2R,3R)-2,3-dihydroxy-3-methylpentanoate + NADP(+) = (S)-2-ethyl-2-hydroxy-3-oxobutanoate + NADPH + H(+). It participates in amino-acid biosynthesis; L-isoleucine biosynthesis; L-isoleucine from 2-oxobutanoate: step 2/4. The protein operates within amino-acid biosynthesis; L-valine biosynthesis; L-valine from pyruvate: step 2/4. Its function is as follows. Involved in the biosynthesis of branched-chain amino acids (BCAA). Catalyzes an alkyl-migration followed by a ketol-acid reduction of (S)-2-acetolactate (S2AL) to yield (R)-2,3-dihydroxy-isovalerate. In the isomerase reaction, S2AL is rearranged via a Mg-dependent methyl migration to produce 3-hydroxy-3-methyl-2-ketobutyrate (HMKB). In the reductase reaction, this 2-ketoacid undergoes a metal-dependent reduction by NADPH to yield (R)-2,3-dihydroxy-isovalerate. The polypeptide is Ketol-acid reductoisomerase (NADP(+)) (Dinoroseobacter shibae (strain DSM 16493 / NCIMB 14021 / DFL 12)).